The sequence spans 478 residues: Uronate isomerase (478 aa).

It belongs to the metallo-dependent hydrolases superfamily. Uronate isomerase family.

It catalyses the reaction D-glucuronate = D-fructuronate. It carries out the reaction aldehydo-D-galacturonate = keto-D-tagaturonate. It participates in carbohydrate metabolism; pentose and glucuronate interconversion. The sequence is that of Uronate isomerase from Bacillus pumilus (strain SAFR-032).